The chain runs to 239 residues: Fatty acid metabolism regulator protein (239 aa).

Positions 6–74 (QSPAGFAEEY…HGKPTKVNNF (69 aa)) constitute an HTH gntR-type domain. The segment at residues 34 to 53 (ERELSELIGVTRTTLREVLQ) is a DNA-binding region (H-T-H motif).

As to quaternary structure, homodimer.

The protein resides in the cytoplasm. Its function is as follows. Multifunctional regulator of fatty acid metabolism. The sequence is that of Fatty acid metabolism regulator protein from Serratia proteamaculans (strain 568).